The chain runs to 275 residues: Voltage-dependent calcium channel gamma-5 subunit (275 aa).

A run of 4 helical transmembrane segments spans residues 8–28 (ALTL…GIAV), 103–123 (FPLV…IGHI), 129–149 (ILAF…VVGL), and 181–201 (FAAI…YLFM).

The protein belongs to the PMP-22/EMP/MP20 family. CACNG subfamily. As to quaternary structure, the L-type calcium channel is composed of five subunits: alpha-1, alpha-2/delta, beta and gamma. Acts as an auxiliary subunit for AMPA-selective glutamate receptors (AMPARs). Found in a complex with GRIA1, GRIA2, GRIA3, GRIA4, CNIH2, CNIH3, CACNG2, CACNG3, CACNG4, CACNG7 and CACNG8. Interacts with GRIA1, GRIA2, GRIA3 and GRIA4.

The protein resides in the membrane. Its subcellular location is the postsynaptic density membrane. Its function is as follows. Regulates the gating properties of AMPA-selective glutamate receptors (AMPARs). Modulates their gating properties by accelerating their rates of activation, deactivation and desensitization. Displays subunit-specific AMPA receptor regulation. Shows specificity for GRIA1, GRIA4 and the long isoform of GRIA2. According to PubMed:18817736, shows only specificity for GRIA2 and specifically to the form of GRIA2 for which a single amino acid in the pore region has been edited from a glutamine to an arginine residue. Thought to stabilize the calcium channel in an inactivated (closed) state. The protein is Voltage-dependent calcium channel gamma-5 subunit (Cacng5) of Rattus norvegicus (Rat).